Consider the following 304-residue polypeptide: Pyridoxal 5'-phosphate synthase subunit PdxS (304 aa).

Residue D34 coordinates D-ribose 5-phosphate. K91 serves as the catalytic Schiff-base intermediate with D-ribose 5-phosphate. D-ribose 5-phosphate is bound at residue G163. R175 contributes to the D-glyceraldehyde 3-phosphate binding site. D-ribose 5-phosphate-binding positions include G224 and G245–S246.

Belongs to the PdxS/SNZ family. As to quaternary structure, in the presence of PdxT, forms a dodecamer of heterodimers.

The enzyme catalyses aldehydo-D-ribose 5-phosphate + D-glyceraldehyde 3-phosphate + L-glutamine = pyridoxal 5'-phosphate + L-glutamate + phosphate + 3 H2O + H(+). The protein operates within cofactor biosynthesis; pyridoxal 5'-phosphate biosynthesis. Its function is as follows. Catalyzes the formation of pyridoxal 5'-phosphate from ribose 5-phosphate (RBP), glyceraldehyde 3-phosphate (G3P) and ammonia. The ammonia is provided by the PdxT subunit. Can also use ribulose 5-phosphate and dihydroxyacetone phosphate as substrates, resulting from enzyme-catalyzed isomerization of RBP and G3P, respectively. This is Pyridoxal 5'-phosphate synthase subunit PdxS from Cutibacterium acnes (strain DSM 16379 / KPA171202) (Propionibacterium acnes).